A 144-amino-acid polypeptide reads, in one-letter code: Cell division protein SepF (144 aa).

Positions 16–42 (DEMNEAPYTEAEQQEEEVPQAQKNERR) are disordered.

Belongs to the SepF family. Homodimer. Interacts with FtsZ.

The protein localises to the cytoplasm. Its function is as follows. Cell division protein that is part of the divisome complex and is recruited early to the Z-ring. Probably stimulates Z-ring formation, perhaps through the cross-linking of FtsZ protofilaments. Its function overlaps with FtsA. This Lactobacillus gasseri (strain ATCC 33323 / DSM 20243 / BCRC 14619 / CIP 102991 / JCM 1131 / KCTC 3163 / NCIMB 11718 / NCTC 13722 / AM63) protein is Cell division protein SepF.